Consider the following 71-residue polypeptide: Large ribosomal subunit protein bL31 (71 aa).

Belongs to the bacterial ribosomal protein bL31 family. Type A subfamily. In terms of assembly, part of the 50S ribosomal subunit.

In terms of biological role, binds the 23S rRNA. The sequence is that of Large ribosomal subunit protein bL31 from Metamycoplasma arthritidis (strain 158L3-1) (Mycoplasma arthritidis).